The primary structure comprises 147 residues: Ribosome-binding factor A (147 aa).

Residues 122–147 form a disordered region; sequence QQQFGSVDDDVIENDIEESDDTEGKV. Acidic residues predominate over residues 128–147; the sequence is VDDDVIENDIEESDDTEGKV.

This sequence belongs to the RbfA family. As to quaternary structure, monomer. Binds 30S ribosomal subunits, but not 50S ribosomal subunits or 70S ribosomes.

The protein localises to the cytoplasm. One of several proteins that assist in the late maturation steps of the functional core of the 30S ribosomal subunit. Associates with free 30S ribosomal subunits (but not with 30S subunits that are part of 70S ribosomes or polysomes). Required for efficient processing of 16S rRNA. May interact with the 5'-terminal helix region of 16S rRNA. The sequence is that of Ribosome-binding factor A from Shewanella oneidensis (strain ATCC 700550 / JCM 31522 / CIP 106686 / LMG 19005 / NCIMB 14063 / MR-1).